The following is a 502-amino-acid chain: Probable cytochrome P450 514A4 (502 aa).

Residues 4 to 24 traverse the membrane as a helical segment; it reads IFTIILTITILVLSLILKDLL. Cysteine 448 provides a ligand contact to heme.

This sequence belongs to the cytochrome P450 family. It depends on heme as a cofactor.

The protein localises to the membrane. The sequence is that of Probable cytochrome P450 514A4 (cyp514A4) from Dictyostelium discoideum (Social amoeba).